Here is an 88-residue protein sequence, read N- to C-terminus: LYR motif-containing protein 2 (88 aa).

The transit peptide at 1-19 (MAASRLPPATLTLKQFVRR) directs the protein to the mitochondrion.

The protein belongs to the complex I LYR family.

It is found in the mitochondrion. In terms of biological role, involved in efficient integration of the N-module into mitochondrial respiratory chain complex I. The chain is LYR motif-containing protein 2 (LYRM2) from Pongo abelii (Sumatran orangutan).